The primary structure comprises 454 residues: tRNA modification GTPase MnmE (454 aa).

Positions 23, 80, and 120 each coordinate (6S)-5-formyl-5,6,7,8-tetrahydrofolate. Residues 216–377 (GMKVVIAGRP…LRNHLKQSMG (162 aa)) enclose the TrmE-type G domain. Asparagine 226 serves as a coordination point for K(+). GTP is bound by residues 226–231 (NAGKSS), 245–251 (TDIAGTT), 270–273 (DTAG), 335–338 (NKAD), and 358–360 (SAR). Serine 230 lines the Mg(2+) pocket. K(+)-binding residues include threonine 245, isoleucine 247, and threonine 250. Threonine 251 lines the Mg(2+) pocket. Residue lysine 454 participates in (6S)-5-formyl-5,6,7,8-tetrahydrofolate binding.

This sequence belongs to the TRAFAC class TrmE-Era-EngA-EngB-Septin-like GTPase superfamily. TrmE GTPase family. In terms of assembly, homodimer. Heterotetramer of two MnmE and two MnmG subunits. The cofactor is K(+).

It localises to the cytoplasm. Exhibits a very high intrinsic GTPase hydrolysis rate. Involved in the addition of a carboxymethylaminomethyl (cmnm) group at the wobble position (U34) of certain tRNAs, forming tRNA-cmnm(5)s(2)U34. This chain is tRNA modification GTPase MnmE, found in Salmonella typhi.